An 847-amino-acid polypeptide reads, in one-letter code: Bifunctional lysine-specific demethylase and histidyl-hydroxylase NO66 (847 aa).

Polar residues predominate over residues 1-24 (MEKVTNSAAAKPQGNNKKQESAYN). Disordered stretches follow at residues 1-45 (MEKV…SDLL), 203-223 (AEAD…KESV), and 254-320 (AEKE…ERKQ). Basic and acidic residues predominate over residues 203–214 (AEADAKNNDTKK). Positions 268–278 (STSSKEAAAAK) are enriched in low complexity. Residues 279–288 (TADHERRLLA) are compositionally biased toward basic and acidic residues. A compositionally biased stretch (polar residues) spans 304–314 (AMESVATQGAS). At serine 323 the chain carries Phosphoserine. At threonine 329 the chain carries Phosphothreonine. Position 330 is a phosphoserine (serine 330). Residues 377–401 (KAPEEGNNNNDEKEMSTETSETHKT) are disordered. Residues 386–401 (NDEKEMSTETSETHKT) are compositionally biased toward basic and acidic residues. Residues 499–644 (CSIRLLNPSA…NLLETLMPMV (146 aa)) enclose the JmjC domain. Fe cation contacts are provided by histidine 545, aspartate 547, and histidine 610.

Belongs to the ROX family. NO66 subfamily. It depends on Fe(2+) as a cofactor.

It localises to the nucleus. The catalysed reaction is N(6),N(6)-dimethyl-L-lysyl(36)-[histone H3] + 2 2-oxoglutarate + 2 O2 = L-lysyl(36)-[histone H3] + 2 formaldehyde + 2 succinate + 2 CO2. Functionally, oxygenase that can act as both a histone lysine demethylase and a ribosomal histidine hydroxylase. Specifically demethylates 'Lys-4' (H3K4me) and 'Lys-36' (H3K36me) of histone H3, thereby playing a central role in histone code. The polypeptide is Bifunctional lysine-specific demethylase and histidyl-hydroxylase NO66 (Drosophila simulans (Fruit fly)).